A 242-amino-acid chain; its full sequence is DNA repair protein RecO (242 aa).

The protein belongs to the RecO family. Monomer.

Involved in DNA repair and RecF pathway recombination. In Shigella flexneri serotype 5b (strain 8401), this protein is DNA repair protein RecO.